A 121-amino-acid polypeptide reads, in one-letter code: Ribonuclease P protein component (121 aa).

This sequence belongs to the RnpA family. As to quaternary structure, consists of a catalytic RNA component (M1 or rnpB) and a protein subunit.

It carries out the reaction Endonucleolytic cleavage of RNA, removing 5'-extranucleotides from tRNA precursor.. In terms of biological role, RNaseP catalyzes the removal of the 5'-leader sequence from pre-tRNA to produce the mature 5'-terminus. It can also cleave other RNA substrates such as 4.5S RNA. The protein component plays an auxiliary but essential role in vivo by binding to the 5'-leader sequence and broadening the substrate specificity of the ribozyme. This chain is Ribonuclease P protein component, found in Neisseria gonorrhoeae (strain ATCC 700825 / FA 1090).